The sequence spans 103 residues: ESAT-6-like protein EsxF (103 aa).

This sequence belongs to the WXG100 family. CFP-10 subfamily.

It is found in the secreted. This is ESAT-6-like protein EsxF from Mycobacterium tuberculosis (strain CDC 1551 / Oshkosh).